Here is a 307-residue protein sequence, read N- to C-terminus: Ornithine carbamoyltransferase (307 aa).

Carbamoyl phosphate is bound by residues 53-56 (STRT), Q80, R104, and 131-134 (HPCQ). Residues N162, D219, and 223–224 (SM) each bind L-ornithine. Carbamoyl phosphate-binding positions include 259–260 (CL) and R287.

The protein belongs to the aspartate/ornithine carbamoyltransferase superfamily. OTCase family.

It localises to the cytoplasm. The catalysed reaction is carbamoyl phosphate + L-ornithine = L-citrulline + phosphate + H(+). It functions in the pathway amino-acid biosynthesis; L-arginine biosynthesis; L-arginine from L-ornithine and carbamoyl phosphate: step 1/3. Reversibly catalyzes the transfer of the carbamoyl group from carbamoyl phosphate (CP) to the N(epsilon) atom of ornithine (ORN) to produce L-citrulline. The polypeptide is Ornithine carbamoyltransferase (Psychrobacter arcticus (strain DSM 17307 / VKM B-2377 / 273-4)).